Here is a 512-residue protein sequence, read N- to C-terminus: Apolipoprotein N-acyltransferase (512 aa).

A run of 6 helical transmembrane segments spans residues 5-25 (LDKY…FAAA), 56-76 (FAVS…FYWI), 92-112 (VPLT…CFWL), 118-138 (LPRG…TEFA), 168-188 (FGGI…LVLA), and 195-215 (SGKR…GYTA). The 245-residue stretch at 233 to 477 (LQGNIDQTLK…ETVLEGHIKG (245 aa)) folds into the CN hydrolase domain. E271 (proton acceptor) is an active-site residue. Residue K337 is part of the active site. Catalysis depends on C389, which acts as the Nucleophile. Residues 487–507 (TGSSWWLMGILTLAALILFIF) traverse the membrane as a helical segment.

It belongs to the CN hydrolase family. Apolipoprotein N-acyltransferase subfamily.

Its subcellular location is the cell inner membrane. The catalysed reaction is N-terminal S-1,2-diacyl-sn-glyceryl-L-cysteinyl-[lipoprotein] + a glycerophospholipid = N-acyl-S-1,2-diacyl-sn-glyceryl-L-cysteinyl-[lipoprotein] + a 2-acyl-sn-glycero-3-phospholipid + H(+). The protein operates within protein modification; lipoprotein biosynthesis (N-acyl transfer). In terms of biological role, catalyzes the phospholipid dependent N-acylation of the N-terminal cysteine of apolipoprotein, the last step in lipoprotein maturation. This chain is Apolipoprotein N-acyltransferase, found in Neisseria meningitidis serogroup A / serotype 4A (strain DSM 15465 / Z2491).